Consider the following 748-residue polypeptide: Rho GTPase-activating protein 24 (748 aa).

The tract at residues 1–20 (MEENNDSTENPQQGQGRQNA) is disordered. Positions 7–18 (STENPQQGQGRQ) are enriched in polar residues. Residues 19-125 (NAIKCGWLRK…WVKSIRRVIW (107 aa)) form the PH domain. In terms of domain architecture, Rho-GAP spans 135 to 329 (QKLEDTVRYE…VMISKHDCLF (195 aa)). 2 disordered regions span residues 354 to 476 (TMGQ…GTHS) and 582 to 641 (DFFG…SSNH). Polar residues-rich tracts occupy residues 356-374 (GQLQ…SRQC) and 382-405 (PQRS…SPKN). Phosphoserine is present on residues Ser369, Ser391, Ser396, Ser398, Ser402, Ser413, Ser415, and Ser437. The span at 432–476 (IVTNGSFSSSNAEGLEKTQTTPNGSLQARRSSSLKVSGTKMGTHS) shows a compositional bias: polar residues. Thr452 carries the phosphothreonine modification. The segment covering 600-615 (DLSHPRDYESKSDHRS) has biased composition (basic and acidic residues). The segment covering 617-641 (GGRSSRATSSSDNSETFVGNSSSNH) has biased composition (low complexity). Residues 649–729 (SSLKQEMTKQ…KEMEQFFSTF (81 aa)) adopt a coiled-coil conformation.

Interacts with FLNA. Phosphorylated by ROCK, leading to activate the RacGAP activity. Isoform 1 is widely expressed with a higher level in kidney. Isoform 2 is mainly expressed in endothelial cells.

The protein resides in the cytoplasm. Its subcellular location is the cytoskeleton. It is found in the cell junction. The protein localises to the adherens junction. It localises to the focal adhesion. The protein resides in the cell projection. In terms of biological role, rho GTPase-activating protein involved in cell polarity, cell morphology and cytoskeletal organization. Acts as a GTPase activator for the Rac-type GTPase by converting it to an inactive GDP-bound state. Controls actin remodeling by inactivating Rac downstream of Rho leading to suppress leading edge protrusion and promotes cell retraction to achieve cellular polarity. Able to suppress RAC1 and CDC42 activity in vitro. Overexpression induces cell rounding with partial or complete disruption of actin stress fibers and formation of membrane ruffles, lamellipodia, and filopodia. Isoform 2 is a vascular cell-specific GAP involved in modulation of angiogenesis. The sequence is that of Rho GTPase-activating protein 24 (ARHGAP24) from Homo sapiens (Human).